A 308-amino-acid chain; its full sequence is Elongation factor Ts (308 aa).

The tract at residues 80–83 (TDFV) is involved in Mg(2+) ion dislocation from EF-Tu.

This sequence belongs to the EF-Ts family.

It localises to the cytoplasm. Associates with the EF-Tu.GDP complex and induces the exchange of GDP to GTP. It remains bound to the aminoacyl-tRNA.EF-Tu.GTP complex up to the GTP hydrolysis stage on the ribosome. This chain is Elongation factor Ts, found in Rhizobium rhizogenes (strain K84 / ATCC BAA-868) (Agrobacterium radiobacter).